The primary structure comprises 2290 residues: Protein Ycf2 (2290 aa).

1638 to 1645 (GSIGTGRS) is a binding site for ATP.

This sequence belongs to the Ycf2 family.

It localises to the plastid. The protein localises to the chloroplast stroma. Its function is as follows. Probable ATPase of unknown function. Its presence in a non-photosynthetic plant (Epifagus virginiana) and experiments in tobacco indicate that it has an essential function which is probably not related to photosynthesis. This Phalaenopsis aphrodite subsp. formosana (Moth orchid) protein is Protein Ycf2.